A 134-amino-acid chain; its full sequence is MIVRTIDEIIGTENEVESDTWTSRRLLLEKDGMGFSFHETIIYAGTETHIHYQNHLEAVYCVGGDGEIETVSDGKVYPIQDGTMYALDQHDEHYPRGGKTDMRLICTFNPPLVGTETHDENGVYPLLSKQPVGK.

The protein belongs to the ectoine synthase family.

The enzyme catalyses (2S)-4-acetamido-2-aminobutanoate = L-ectoine + H2O. It participates in amine and polyamine biosynthesis; ectoine biosynthesis; L-ectoine from L-aspartate 4-semialdehyde: step 3/3. In terms of biological role, catalyzes the circularization of gamma-N-acetyl-alpha,gamma-diaminobutyric acid (ADABA) to ectoine (1,4,5,6-tetrahydro-2-methyl-4-pyrimidine carboxylic acid), which is an excellent osmoprotectant. This chain is L-ectoine synthase (ectC), found in Sporosarcina pasteurii (Bacillus pasteurii).